Consider the following 729-residue polypeptide: Fatty acid oxidation complex subunit alpha (729 aa).

Positions 1–189 are enoyl-CoA hydratase/isomerase; sequence MLYKGDTLYL…KIGLVDGVVK (189 aa). D296 contributes to the substrate binding site. Residues 311-729 form a 3-hydroxyacyl-CoA dehydrogenase region; that stretch reads ETPKQAAVLG…ARPVGDLKTA (419 aa). Residues M324, D343, 400–402, K407, and S429 each bind NAD(+); that span reads VVE. Catalysis depends on H450, which acts as the For 3-hydroxyacyl-CoA dehydrogenase activity. Position 453 (N453) interacts with NAD(+). Residues N500 and Y660 each coordinate substrate. The segment at 708–729 is disordered; the sequence is RHNEPYYPPVEPARPVGDLKTA.

The protein in the N-terminal section; belongs to the enoyl-CoA hydratase/isomerase family. This sequence in the C-terminal section; belongs to the 3-hydroxyacyl-CoA dehydrogenase family. In terms of assembly, heterotetramer of two alpha chains (FadB) and two beta chains (FadA).

It carries out the reaction a (3S)-3-hydroxyacyl-CoA + NAD(+) = a 3-oxoacyl-CoA + NADH + H(+). The enzyme catalyses a (3S)-3-hydroxyacyl-CoA = a (2E)-enoyl-CoA + H2O. It catalyses the reaction a 4-saturated-(3S)-3-hydroxyacyl-CoA = a (3E)-enoyl-CoA + H2O. The catalysed reaction is (3S)-3-hydroxybutanoyl-CoA = (3R)-3-hydroxybutanoyl-CoA. It carries out the reaction a (3Z)-enoyl-CoA = a 4-saturated (2E)-enoyl-CoA. The enzyme catalyses a (3E)-enoyl-CoA = a 4-saturated (2E)-enoyl-CoA. Its pathway is lipid metabolism; fatty acid beta-oxidation. Its function is as follows. Involved in the aerobic and anaerobic degradation of long-chain fatty acids via beta-oxidation cycle. Catalyzes the formation of 3-oxoacyl-CoA from enoyl-CoA via L-3-hydroxyacyl-CoA. It can also use D-3-hydroxyacyl-CoA and cis-3-enoyl-CoA as substrate. The polypeptide is Fatty acid oxidation complex subunit alpha (Escherichia coli O8 (strain IAI1)).